The following is a 555-amino-acid chain: Urocanate hydratase (555 aa).

NAD(+) is bound by residues Gly-51 to Gly-52, Gln-129, Gly-175 to Gly-177, Glu-195, Gln-262 to His-266, Tyr-272 to Leu-273, and Tyr-321. Cys-409 is a catalytic residue. Gly-491 is a binding site for NAD(+).

The protein belongs to the urocanase family. It depends on NAD(+) as a cofactor.

It localises to the cytoplasm. It carries out the reaction 4-imidazolone-5-propanoate = trans-urocanate + H2O. Its pathway is amino-acid degradation; L-histidine degradation into L-glutamate; N-formimidoyl-L-glutamate from L-histidine: step 2/3. Functionally, catalyzes the conversion of urocanate to 4-imidazolone-5-propionate. The polypeptide is Urocanate hydratase (Xanthomonas campestris pv. campestris (strain ATCC 33913 / DSM 3586 / NCPPB 528 / LMG 568 / P 25)).